A 1392-amino-acid polypeptide reads, in one-letter code: DNA-directed RNA polymerase subunit beta (1392 aa).

The protein belongs to the RNA polymerase beta chain family. As to quaternary structure, the RNAP catalytic core consists of 2 alpha, 1 beta, 1 beta' and 1 omega subunit. When a sigma factor is associated with the core the holoenzyme is formed, which can initiate transcription.

It carries out the reaction RNA(n) + a ribonucleoside 5'-triphosphate = RNA(n+1) + diphosphate. Functionally, DNA-dependent RNA polymerase catalyzes the transcription of DNA into RNA using the four ribonucleoside triphosphates as substrates. This is DNA-directed RNA polymerase subunit beta from Neisseria meningitidis serogroup A / serotype 4A (strain DSM 15465 / Z2491).